Consider the following 107-residue polypeptide: Anaphase-promoting complex subunit 14 (107 aa).

In terms of assembly, the APC/C is composed of at least 13 subunits: apc1, apc2, nuc2, apc4, apc5, cut9, apc8, apc10, apc11, hcn1, apc13, apc14 and apc15.

It localises to the ascus epiplasm. In terms of biological role, component of the anaphase promoting complex/cyclosome (APC/C), a cell cycle-regulated E3 ubiquitin-protein ligase complex that controls progression through mitosis and the G1 phase of the cell cycle. The APC/C is thought to confer substrate specificity and, in the presence of ubiquitin-conjugating E2 enzymes, it catalyzes the formation of protein-ubiquitin conjugates that are subsequently degraded by the 26S proteasome. Appears to play a role in spore wall formation. The polypeptide is Anaphase-promoting complex subunit 14 (Schizosaccharomyces pombe (strain 972 / ATCC 24843) (Fission yeast)).